A 176-amino-acid polypeptide reads, in one-letter code: NAD(P)H-quinone oxidoreductase subunit 6, chloroplastic (176 aa).

The next 5 membrane-spanning stretches (helical) occupy residues 10-30 (ILLVFLGSGLILGGLGVVLLT), 32-52 (PISSAFSLGLVLVCISLFYIP), 61-81 (AQLLIYVGAINVLIVFAVMFM), 92-112 (LWTIGDGFTSLVCTSILFSLI), and 152-172 (FYLPFELISIILLVALIGAIA).

The protein belongs to the complex I subunit 6 family. NDH is composed of at least 16 different subunits, 5 of which are encoded in the nucleus.

The protein resides in the plastid. Its subcellular location is the chloroplast thylakoid membrane. It catalyses the reaction a plastoquinone + NADH + (n+1) H(+)(in) = a plastoquinol + NAD(+) + n H(+)(out). The catalysed reaction is a plastoquinone + NADPH + (n+1) H(+)(in) = a plastoquinol + NADP(+) + n H(+)(out). In terms of biological role, NDH shuttles electrons from NAD(P)H:plastoquinone, via FMN and iron-sulfur (Fe-S) centers, to quinones in the photosynthetic chain and possibly in a chloroplast respiratory chain. The immediate electron acceptor for the enzyme in this species is believed to be plastoquinone. Couples the redox reaction to proton translocation, and thus conserves the redox energy in a proton gradient. This Chloranthus spicatus (Chulantree) protein is NAD(P)H-quinone oxidoreductase subunit 6, chloroplastic (ndhG).